The chain runs to 462 residues: Retinoic acid receptor RXR-alpha (462 aa).

The tract at residues 1 to 107 is disordered; that stretch reads MDTKHFLPLD…MNPVSSSEDI (107 aa). Residues 1 to 134 are modulating; that stretch reads MDTKHFLPLD…GNMASFTKHI (134 aa). Lys4 is covalently cross-linked (Glycyl lysine isopeptide (Lys-Gly) (interchain with G-Cter in SUMO2)). The span at 11–24 shows a compositional bias: polar residues; that stretch reads FSTQVNSSLTSPTG. 2 positions are modified to phosphoserine: Ser21 and Ser27. Polar residues predominate over residues 49–58; the sequence is SPISTLSSPI. Phosphoserine; by MAPK8 and MAPK9 is present on residues Ser56 and Ser70. Over residues 78–104 the composition is skewed to polar residues; it reads SVPTTPTLGFSTGSPQLSSPMNPVSSS. A Phosphothreonine; by MAPK8 and MAPK9 modification is found at Thr82. A Glycyl lysine isopeptide (Lys-Gly) (interchain with G-Cter in SUMO) cross-link involves residue Lys108. Ser129 carries the phosphoserine modification. Positions 135 and 138 each coordinate Zn(2+). Residues 135-155 form an NR C4-type zinc finger; that stretch reads CAICGDRSSGKHYGVYSCEGC. The nuclear receptor DNA-binding region spans 135 to 200; it reads CAICGDRSSG…RYQKCLAMGM (66 aa). Lys145 bears the N6-acetyllysine; by EP300 mark. Zn(2+) contacts are provided by Cys152 and Cys155. The interval 160 to 165 is nuclear localization signal; the sequence is KRTVRK. 4 residues coordinate Zn(2+): Cys171, Cys177, Cys187, and Cys190. The segment at 171–195 adopts an NR C4-type zinc-finger fold; that stretch reads CRDNKDCLIDKRQRNRCQYCRYQKC. A hinge region spans residues 201-224; that stretch reads KREAVQEERQRGKDRNENEVESTS. The span at 206–218 shows a compositional bias: basic and acidic residues; it reads QEERQRGKDRNEN. The disordered stretch occupies residues 206–228; sequence QEERQRGKDRNENEVESTSSANE. The region spanning 227–458 is the NR LBD domain; sequence NEDMPVERIL…TFLMEMLEAP (232 aa). Position 259 is a phosphoserine (Ser259). Ser260 is subject to Phosphoserine; by MAPK8 and MAPK9. 9-cis-retinoate is bound by residues Arg316 and Ala327. All-trans-retinoate-binding residues include Arg316 and Ala327. The interval 348–368 is required for nuclear export; the sequence is RVLTELVSKMRDMQMDKTELG.

This sequence belongs to the nuclear hormone receptor family. NR2 subfamily. As to quaternary structure, homodimer. Heterodimer (via C-terminus) with RARA; required for ligand-dependent retinoic acid receptor transcriptional activity; association with RARA is enhanced by pulsatile shear stress. Heterodimer with PPARA (via the leucine-like zipper in the LBD); the interaction is required for PPARA transcriptional activity. Heterodimerizes with PPARG. Heterodimerizes (via NR LBD) with RARB. Heterodimerizes with NR1H4; the heterodimerization enhances the binding affinity for LXXLL motifs from coactivators. Interacts with NCOA3 and NCOA6 coactivators. Interacts with coactivator FAM120B. Interacts with coactivator PELP1, SENP6, SFPQ, DNTTIP2 and RNF8. Interacts with PRMT2. Interacts with ASXL1. Interacts with BHLHE40/DEC1, BHLHE41/DEC2, NCOR1 and NCOR2. Interacts in a ligand-dependent fashion with MED1 and NCOA1. Interacts with VDR. Interacts with EP300; the interaction is decreased by 9-cis retinoic acid. Heterodimer (via C-terminus) with NR4A1 (via DNA-binding domain); DNA-binding of the heterodimer is enhanced by 9-cis retinoic acid. NR4A1 competes with EP300 for interaction with RXRA and thereby attenuates EP300 mediated acetylation of RXRA. In the absence of hormonal ligand, interacts with TACC1. Interacts ith IGFBP3. In terms of assembly, (Microbial infection) Interacts (via the DNA binding domain) with HCV core protein; the interaction enhances the transcriptional activities of the RXRA/RARA and the RXRA/PPARA heterodimers. Post-translationally, acetylated by EP300; acetylation enhances DNA binding and transcriptional activity. Phosphorylated on serine and threonine residues mainly in the N-terminal modulating domain. Constitutively phosphorylated on Ser-21 in the presence or absence of ligand. Under stress conditions, hyperphosphorylated by activated JNK on Ser-56, Ser-70, Thr-82 and Ser-260. Phosphorylated on Ser-27, in vitro, by PKA. This phosphorylation is required for repression of cAMP-mediated transcriptional activity of RARA. In terms of processing, ubiquitinated by UBR5, leading to its degradation: UBR5 specifically recognizes and binds ligand-bound RXRA when it is not associated with coactivators (NCOAs). In presence of NCOAs, the UBR5-degron is not accessible, preventing its ubiquitination and degradation. Post-translationally, sumoylation negatively regulates transcriptional activity. Desumoylated specifically by SENP6. As to expression, expressed in lung fibroblasts (at protein level). Expressed in monocytes. Highly expressed in liver, also found in kidney and brain.

The protein localises to the nucleus. It localises to the cytoplasm. It is found in the mitochondrion. In terms of biological role, receptor for retinoic acid that acts as a transcription factor. Forms homo- or heterodimers with retinoic acid receptors (RARs) and binds to target response elements in response to their ligands, all-trans or 9-cis retinoic acid, to regulate gene expression in various biological processes. The RAR/RXR heterodimers bind to the retinoic acid response elements (RARE) composed of tandem 5'-AGGTCA-3' sites known as DR1-DR5 to regulate transcription. The high affinity ligand for retinoid X receptors (RXRs) is 9-cis retinoic acid. In the absence of ligand, the RXR-RAR heterodimers associate with a multiprotein complex containing transcription corepressors that induce histone deacetylation, chromatin condensation and transcriptional suppression. On ligand binding, the corepressors dissociate from the receptors and coactivators are recruited leading to transcriptional activation. Serves as a common heterodimeric partner for a number of nuclear receptors, such as RARA, RARB and PPARA. The RXRA/RARB heterodimer can act as a transcriptional repressor or transcriptional activator, depending on the RARE DNA element context. The RXRA/PPARA heterodimer is required for PPARA transcriptional activity on fatty acid oxidation genes such as ACOX1 and the P450 system genes. Together with RARA, positively regulates microRNA-10a expression, thereby inhibiting the GATA6/VCAM1 signaling response to pulsatile shear stress in vascular endothelial cells. Acts as an enhancer of RARA binding to RARE DNA element. May facilitate the nuclear import of heterodimerization partners such as VDR and NR4A1. Promotes myelin debris phagocytosis and remyelination by macrophages. Plays a role in the attenuation of the innate immune system in response to viral infections, possibly by negatively regulating the transcription of antiviral genes such as type I IFN genes. Involved in the regulation of calcium signaling by repressing ITPR2 gene expression, thereby controlling cellular senescence. This Homo sapiens (Human) protein is Retinoic acid receptor RXR-alpha (RXRA).